Here is a 376-residue protein sequence, read N- to C-terminus: MWTPSRKQLCLAFLSVCVLSAGSFFFHLNGGNFFQNALTFSVLCPDYHLLKSPVAMVCLPYPSNASSGSPSCPEQSLLSGTWTITPGGRFGNQMGQYATLLALAQLNGRRAFIQPEMHTTLAPVFRISLPVLDPEVDSLTPWQHLVLHDWMSEEYSHLEDPFLKLSGFPCSWTFFHHLREQIRREFTLHDHLREDAQRLLSGLRIGPAGIRPRTYVGVHVRRGDYLEVMPNRWKGVVGDRAYLQKAMDWFRARHKDPIFVVTSNGMRWCLENIDTSHGDVVFAGNGQEGTPGKDFALLTQCNHTIMTIGTFGFWAAYLAGGDTVYLANFTLPDSEFLKIFRPKAAFLPEWVGINADLSPLQAQFDPWETDSLFRLA.

The Cytoplasmic segment spans residues 1-12 (MWTPSRKQLCLA). The helical; Signal-anchor for type II membrane protein transmembrane segment at 13–29 (FLSVCVLSAGSFFFHLN) threads the bilayer. Over 30–376 (GGNFFQNALT…WETDSLFRLA (347 aa)) the chain is Lumenal. 3 N-linked (GlcNAc...) asparagine glycosylation sites follow: Asn64, Asn302, and Asn328.

Belongs to the glycosyltransferase 11 family.

It is found in the golgi apparatus. The protein localises to the golgi stack membrane. The enzyme catalyses a beta-D-galactosyl-(1-&gt;4)-N-acetyl-beta-D-glucosaminyl derivative + GDP-beta-L-fucose = an alpha-L-Fuc-(1-&gt;2)-beta-D-Gal-(1-&gt;4)-beta-D-GlcNAc derivative + GDP + H(+). The catalysed reaction is a ganglioside GA1 + GDP-beta-L-fucose = a ganglioside Fuc-GA1 + GDP + H(+). It catalyses the reaction a beta-D-Gal-(1-&gt;3)-beta-D-GlcNAc-(1-&gt;3)-beta-D-Gal-(1-&gt;4)-beta-D-Glc-(1&lt;-&gt;1')-Cer(d18:1(4E)) + GDP-beta-L-fucose = alpha-L-fucosyl-(1-&gt;2)- beta-D-galactosyl-(1-&gt;3)-N-acetyl-beta-D-glucosaminyl-(1-&gt;3)-beta-D-galactosyl-(1-&gt;4)-beta-D-glucosyl-(1&lt;-&gt;1')-N-acylsphing-4-enine + GDP + H(+). It carries out the reaction a neolactoside nLc4Cer(d18:1(4E)) + GDP-beta-L-fucose = a neolactoside IV(2)-alpha-Fuc-nLc4Cer(d18:1(4E)) + GDP + H(+). The enzyme catalyses a ganglioside GM1 + GDP-beta-L-fucose = a ganglioside Fuc-GM1 + GDP + H(+). The catalysed reaction is beta-D-galactosyl-(1-&gt;3)-N-acetyl-D-galactosamine + GDP-beta-L-fucose = alpha-L-fucosyl-(1-&gt;2)-beta-D-galactosyl-(1-&gt;3)-N-acetyl-D-galactosamine + GDP + H(+). It functions in the pathway protein modification; protein glycosylation. In terms of biological role, catalyzes the transfer of L-fucose, from a guanosine diphosphate-beta-L-fucose, to the terminal galactose residue of glycoconjugates through an alpha(1,2) linkage leading to H antigen synthesis that is an intermediate substrate in the synthesis of ABO blood group antigens. H antigen is essential for maturation of the glomerular layer of the main olfactory bulb, in cell migration and early cell-cell contacts during tumor associated angiogenesis. Preferentially fucosylates soluble lactose and to a lesser extent fucosylates glycolipids gangliosides GA1 and GM1a. This is Galactoside alpha-(1,2)-fucosyltransferase 1 from Rattus norvegicus (Rat).